A 557-amino-acid polypeptide reads, in one-letter code: MADSSPDSCFKGGKFSAPGFRFHPTDEELVMYYLKRKICRKRLRVNVIGVVDVYKMDPEELPGQSMLKTGDRQWFYFTPRSRKYPNAARSNRGTENGYWKATGKDRVIEYNSRSVGLKKTLVFYRGRAPSGERTDWVMHEYTMDEDELGRCKNPQEYYALYKLFKKSGAGPKNGEQYGAPFQEEEWVDDDNEDVNAIAVAVPEQPVVRYEDARRVDERRLFNPVILQLEDIDELLNGIPNAPGVPQRCIPQVNSEEELQSTLVNNSAREFLPNGQQYNRPSSFDSLETAEVTSAPLVFEKEDFIEMDDLLLIPEFGASSTEKAAQFSNHGEFDDFNEFDQLFHDVSMSLDMEPIDQGTSANLSSLSDSANYTSDQKQQLLYQQFQDQTPENQLNNIMDPSTTLNQITSDIWFEDDQAILFDQQQSFSGAFASPSSGVMPDSTNPTMSVNAQGHEIQNGGGTTSQFSSALWALMDSIPSTPASACEGPLNRTFVRMSSFSRMRFNGKANGTPVSTTIAKKGIRNRGFLLLSIVGALCAIFWVLVATVRVSGRSLLLKD.

The 151-residue stretch at 16–166 (SAPGFRFHPT…YYALYKLFKK (151 aa)) folds into the NAC domain. A DNA-binding region spans residues 115–172 (VGLKKTLVFYRGRAPSGERTDWVMHEYTMDEDELGRCKNPQEYYALYKLFKKSGAGPK). Residues 526–546 (FLLLSIVGALCAIFWVLVATV) traverse the membrane as a helical segment.

In terms of tissue distribution, expressed in roots, rosette leaves, cauline leaves, shoot apex, stems and flowers.

The protein resides in the endoplasmic reticulum membrane. It is found in the nucleus. In terms of biological role, transcriptional activator activated by proteolytic cleavage through regulated intramembrane proteolysis (RIP). Transcriptional activator that acts as a positive regulator of AOX1A during mitochondrial dysfunction. Binds directly to AOX1A promoter. Mediates mitochondrial retrograde signaling. The protein is NAC domain-containing protein 17 of Arabidopsis thaliana (Mouse-ear cress).